The primary structure comprises 186 residues: Cysteine protease inhibitor 10 (186 aa).

The signal sequence occupies residues 1 to 7 (TCHDDDN). Intrachain disulfides connect C49/C101 and C149/C155.

This sequence belongs to the protease inhibitor I3 (leguminous Kunitz-type inhibitor) family.

Its subcellular location is the vacuole. Probable inhibitor of cysteine proteases. May protect the plant by inhibiting proteases of invading organisms. This Solanum tuberosum (Potato) protein is Cysteine protease inhibitor 10.